The primary structure comprises 239 residues: Mediator of RNA polymerase II transcription subunit 7 (239 aa).

2 disordered regions span residues 1-21 and 43-66; these read MSSL…PPPP and LFVN…DMSV. Basic and acidic residues predominate over residues 46-66; that stretch reads NDEKGKTKGKEKKSDDRDMSV.

Belongs to the Mediator complex subunit 7 family. As to quaternary structure, component of the Mediator complex.

Its subcellular location is the nucleus. In terms of biological role, component of the Mediator complex, a coactivator involved in the regulated transcription of nearly all RNA polymerase II-dependent genes. Mediator functions as a bridge to convey information from gene-specific regulatory proteins to the basal RNA polymerase II transcription machinery. Mediator is recruited to promoters by direct interactions with regulatory proteins and serves as a scaffold for the assembly of a functional preinitiation complex with RNA polymerase II and the general transcription factors. The polypeptide is Mediator of RNA polymerase II transcription subunit 7 (MED7) (Cryptococcus neoformans var. neoformans serotype D (strain B-3501A) (Filobasidiella neoformans)).